Consider the following 427-residue polypeptide: MSTISFFATSKRTSCDRCRKQKLRCPPDKDDMGTCGRCLRAGVACATSYTKPRGRSQKHGISTDGTSHVSGLDMQEPALPTPESVLSAGLTSSVQVAEDGSQLWSPLEEYNHLPSLSNFESGALSQSQDEDFAGLWWSPLHEDLDLDVHMDPSGACQNGYSAEISSFSRTDCSRQSNDCSPETLQHVECDMRLSQLNLELCRQSKAYHHWPNTTSDGSVRRPHFAIASALRDLLQNTEAFIHILHCLRNGTELNLDGRYQEPISTHDTGVSPPSLAFPSILNLTSCFFRIVDLFNVLLSSLALELATHSPLQRRSSSSSVTSALQILPDLKLAGLAVQEVSLQTKILVLTITHHFETMERLLGLPADLRVSECKDDNGYGLLGASWTSVLSSGRREKFELGWRRTGNWVTSIESLKANMGTLTKGSC.

A DNA-binding region (zn(2)-C6 fungal-type) is located at residues 15 to 45; the sequence is CDRCRKQKLRCPPDKDDMGTCGRCLRAGVAC. The disordered stretch occupies residues 51–70; the sequence is KPRGRSQKHGISTDGTSHVS. Polar residues predominate over residues 59-69; that stretch reads HGISTDGTSHV.

The protein resides in the nucleus. Its function is as follows. Transcription factor that regulates the expression of the gene cluster that mediates the biosynthesis of the phytotoxin stemphyloxin II. This is Stemphyloxin II biosynthesis cluster transcription factor sthR from Phaeosphaeria nodorum (strain SN15 / ATCC MYA-4574 / FGSC 10173) (Glume blotch fungus).